The following is a 272-amino-acid chain: uncharacterized protein (272 aa).

The first 22 residues, 1-22, serve as a signal peptide directing secretion; sequence MEYIKKIALYMSVLLLIIFIGG. A lipid anchor (N-palmitoyl cysteine) is attached at Cys-23. A lipid anchor (S-diacylglycerol cysteine) is attached at Cys-23.

It belongs to the staphylococcal tandem lipoprotein family.

The protein localises to the cell membrane. This is an uncharacterized protein from Staphylococcus aureus (strain MRSA252).